A 776-amino-acid chain; its full sequence is Glucocorticoid receptor (776 aa).

Disordered stretches follow at residues 1–25 (MDPKDLLKPSSGSPAVRGSPHYNDK), 47–86 (SCPTSTASQSNTRQQQHFQKQLTATGDSTNGLNNNVPQPD), and 394–415 (SSPGIRSDASPSPSTSSTSTGP). A modulating region spans residues 1 to 419 (MDPKDLLKPS…STSTGPPPKL (419 aa)). The segment covering 47-83 (SCPTSTASQSNTRQQQHFQKQLTATGDSTNGLNNNVP) has biased composition (polar residues). Over residues 403–413 (SPSPSTSSTST) the composition is skewed to low complexity. NR C4-type zinc fingers lie at residues 420-440 (CLVCSDEASGCHYGVLTCGSC) and 456-480 (CAGRNDCIIDKIRRKNCPACRYRKC). Positions 420 to 485 (CLVCSDEASG…RYRKCLQAGM (66 aa)) form a DNA-binding region, nuclear receptor. Residues 486–522 (NLEARKTKKKIKGIQQSTTATARESPETSMTRTLVPA) are hinge. In terms of domain architecture, NR LBD spans 523–757 (SVAQLTPTLI…FPDMLSEIIS (235 aa)).

The protein belongs to the nuclear hormone receptor family. NR3 subfamily. Heteromultimeric cytoplasmic complex with HSP90. Upon ligand binding the complex undergoes a conformation change and moves to the nucleus, where it dissociates. Binds to DNA as a homodimer, and as heterodimer with NR3C2. Interaction with numerous other transcription factors modulates transcription activation. In terms of tissue distribution, expressed in liver with relative abundance.

The protein resides in the cytoplasm. The protein localises to the nucleus. Its subcellular location is the mitochondrion. It is found in the cytoskeleton. It localises to the spindle. The protein resides in the microtubule organizing center. The protein localises to the centrosome. Its function is as follows. Receptor for glucocorticoids (GC). Has a dual mode of action: as a transcription factor that binds to glucocorticoid response elements (GRE), both for nuclear and mitochondrial DNA, and as a modulator of other transcription factors. Affects inflammatory responses, cellular proliferation and differentiation in target tissues. Involved in chromatin remodeling. Plays a role in rapid mRNA degradation by binding to the 5' UTR of target mRNAs and interacting with PNRC2 in a ligand-dependent manner which recruits the RNA helicase UPF1 and the mRNA-decapping enzyme DCP1A, leading to RNA decay. Could act as a coactivator for STAT5-dependent transcription upon growth hormone (GH) stimulation and could reveal an essential role of hepatic GR in the control of body growth. Mediates glucocorticoid-induced apoptosis. Promotes accurate chromosome segregation during mitosis. May act as a tumor suppressor. May play a negative role in adipogenesis through the regulation of lipolytic and antilipogenic gene expression. The polypeptide is Glucocorticoid receptor (nr3c1) (Xenopus laevis (African clawed frog)).